A 179-amino-acid chain; its full sequence is ATP synthase subunit delta (179 aa).

It belongs to the ATPase delta chain family. In terms of assembly, F-type ATPases have 2 components, F(1) - the catalytic core - and F(0) - the membrane proton channel. F(1) has five subunits: alpha(3), beta(3), gamma(1), delta(1), epsilon(1). F(0) has three main subunits: a(1), b(2) and c(10-14). The alpha and beta chains form an alternating ring which encloses part of the gamma chain. F(1) is attached to F(0) by a central stalk formed by the gamma and epsilon chains, while a peripheral stalk is formed by the delta and b chains.

The protein resides in the cell membrane. In terms of biological role, f(1)F(0) ATP synthase produces ATP from ADP in the presence of a proton or sodium gradient. F-type ATPases consist of two structural domains, F(1) containing the extramembraneous catalytic core and F(0) containing the membrane proton channel, linked together by a central stalk and a peripheral stalk. During catalysis, ATP synthesis in the catalytic domain of F(1) is coupled via a rotary mechanism of the central stalk subunits to proton translocation. Functionally, this protein is part of the stalk that links CF(0) to CF(1). It either transmits conformational changes from CF(0) to CF(1) or is implicated in proton conduction. This Staphylococcus saprophyticus subsp. saprophyticus (strain ATCC 15305 / DSM 20229 / NCIMB 8711 / NCTC 7292 / S-41) protein is ATP synthase subunit delta.